The primary structure comprises 765 residues: MGVAAVLDWLVQDGERLASCRHDHPFAVLGPQASDQGWTVRMWMPEAQSVSLLQAGEEIAMTTPNHPWVFEAQVSQDPGCHYRVKVERGGIVHEQHDPWAFRGEWMGEMDRHLFAEGNHHHIWQKMGAHLTERDGITGVMFCLWAPNALSVSVIGDLNSWDGRHHPMQQRVGGIWELFVPGLEEGHLYKYEIRTQDGHCYQKADPYGFQHEVRPDNSSVVARLNGFQWSDQTWMQKRDSSNALDQPISVYEMHLGSWIHASADEPWIQPDGTPRPPVPAADMKPGARLLTYAELADRLIPYVKDRGFTHIEVMPITEHPFDGSWGYQVTGWYAPTSRYGTPDEFRAFVDRCHAEGIGVIIDWVPGHFPKDAHGLAFFDGAHLYEHSDPRIGEHKEWGTLIFNYSRNEVRNFLVANLIFWFEQFHIDGIRVDAVASMLYRDYLRPDGEWLPNESGGRENTEAVRFLQQANHVLFQHFPGALSIAEESTTWPMVTQPTDSGGLGFNLKWNMGWMHDMLDYFELDPWFRQFHQNNITFSIWYTYTENFMLALSHDEVVHGKSHLMHKMPGDDWQKYANTRALLSYMWTHPGKKTIFMGMEFGQRAEWNVWGDLQWDLLNYEPHKGIQRLVDDLNVLYKAEPALWRDDFDQFGFQWIDCNDNRHSVISFMRRESASGTWLVVVANFTPQSHSHYRVGVPLSGFYEEIFNSDAAKYGGSNLGNMGGKPTDEWGIHGYENSLDLCLPPLSLMVFKHDPKRSLNSSEPDNIV.

The Nucleophile role is filled by D431. Residue E484 is the Proton donor of the active site.

It belongs to the glycosyl hydrolase 13 family. GlgB subfamily. Monomer.

The enzyme catalyses Transfers a segment of a (1-&gt;4)-alpha-D-glucan chain to a primary hydroxy group in a similar glucan chain.. Its pathway is glycan biosynthesis; glycogen biosynthesis. Catalyzes the formation of the alpha-1,6-glucosidic linkages in glycogen by scission of a 1,4-alpha-linked oligosaccharide from growing alpha-1,4-glucan chains and the subsequent attachment of the oligosaccharide to the alpha-1,6 position. The chain is 1,4-alpha-glucan branching enzyme GlgB from Synechococcus sp. (strain CC9605).